A 493-amino-acid chain; its full sequence is Proline--tRNA ligase (493 aa).

Belongs to the class-II aminoacyl-tRNA synthetase family. ProS type 3 subfamily. In terms of assembly, homodimer.

The protein localises to the cytoplasm. The enzyme catalyses tRNA(Pro) + L-proline + ATP = L-prolyl-tRNA(Pro) + AMP + diphosphate. Functionally, catalyzes the attachment of proline to tRNA(Pro) in a two-step reaction: proline is first activated by ATP to form Pro-AMP and then transferred to the acceptor end of tRNA(Pro). The sequence is that of Proline--tRNA ligase from Porphyromonas gingivalis (strain ATCC 33277 / DSM 20709 / CIP 103683 / JCM 12257 / NCTC 11834 / 2561).